Here is a 2123-residue protein sequence, read N- to C-terminus: Bromodomain adjacent to zinc finger domain protein 2B (2123 aa).

7 disordered regions span residues 1–129 (MESG…VNGT), 144–306 (TPAS…LSQQ), 357–402 (PSPD…EMGK), 473–534 (NENV…HPHP), 546–691 (RGTD…RRVA), 756–793 (RAMD…GSAE), and 937–960 (ARKK…LNKE). Residues 7–46 (LPSSPASSTTPTSSSAPSVASAVSKSSLSTGAASLSSTAS) show a composition bias toward low complexity. Positions 83-95 (FFPPLLGIPPLFA) are enriched in pro residues. The segment covering 100 to 116 (NHDSSFHSRTSGKSSRN) has biased composition (polar residues). 2 stretches are compositionally biased toward low complexity: residues 147–157 (SSSMGQNQSTS) and 193–216 (ESSS…ISSS). Positions 217 to 243 (DSDDLEEEEEEDQSVEESEDDDSDSET) are enriched in acidic residues. The segment covering 259-277 (SDPKTDGQKATEKAQERRT) has biased composition (basic and acidic residues). Low complexity-rich tracts occupy residues 291-306 (PPFQ…LSQQ) and 366-379 (NKNT…LTSE). Residues 473 to 502 (NENVSSSTPFSSPVNLSTSGRRAPGSQTPA) show a composition bias toward polar residues. Residues 546 to 559 (RGTDSDVPSSKDSE) are compositionally biased toward basic and acidic residues. A compositionally biased stretch (acidic residues) spans 560–587 (DSNEDEEEDDEEEDEEDDEDDESDDSQS). A compositionally biased stretch (low complexity) spans 588–597 (ESDSNSQSDS). Over residues 598–615 (EGSEDDEEKDQEESDSDT) the composition is skewed to acidic residues. Low complexity-rich tracts occupy residues 628 to 637 (SSSAKSPPSS) and 671 to 683 (TSSS…PHSG). Positions 690 to 765 (VADDQELRIP…RAMDGRRGRP (76 aa)) constitute an MBD domain. The span at 756–778 (RAMDGRRGRPPNPDRPRAREESR) shows a compositional bias: basic and acidic residues. A DDT domain is found at 1004–1069 (GTTFSDCLMV…LSAAVCDPGL (66 aa)). Disordered regions lie at residues 1183-1260 (RDAS…QTAS), 1396-1444 (PPES…KTDA), 1499-1526 (TLVT…SSVQ), and 1588-1614 (FLTS…AQPV). The span at 1214–1238 (SDYDDDDDDDSDDQADEDEEDEEDK) shows a compositional bias: acidic residues. A compositionally biased stretch (basic and acidic residues) spans 1239–1248 (DDKKGKKTDI). Positions 1254–1281 (EGDQTASVEELEKQIEKLSKQQSQYRRK) form a coiled coil. Polar residues-rich tracts occupy residues 1408–1422 (NVST…QNSG) and 1430–1444 (PSAT…KTDA). The segment covering 1505–1515 (SQPPSKSPSPA) has biased composition (pro residues). Over residues 1588-1600 (FLTSSVASSKSDS) the composition is skewed to low complexity. The segment at 1886–1936 (KVYCQICRKGDNEELLLLCDGCDKGCHTYCHRPKITTIPDGDWFCPACISK) adopts a PHD-type zinc-finger fold. Residues 1949 to 2013 (VKGKKTNDSK…AESTTSIKKP (65 aa)) are disordered. A compositionally biased stretch (basic and acidic residues) spans 1984–1995 (GSKELKKRKMEE). Polar residues predominate over residues 1996–2010 (TTSLNLSKAESTTSI). Residues 2015–2119 (KDESRDLALC…KYFEKKWTDT (105 aa)) form the Bromo domain.

This sequence belongs to the WAL family. In terms of assembly, component of the BRF-1 ISWI chromatin remodeling complex, at least composed of SMARCA1 and BAZ2B, which regulates the spacing of histone octamers on the DNA template to facilitate access to DNA. Within the BRF-1 ISWI chromatin remodeling complex interacts with SMARCA1; the interaction is direct. Component of the BRF-5 ISWI chromatin remodeling complex, at least composed of SMARCA5/SNF2H and BAZ2B, which regulates the spacing of histone octamers on the DNA template to facilitate access to DNA. Within the BRF-5 ISWI chromatin remodeling complex interacts with SMARCA5/SNF2H; the interaction is direct. Interacts with acetylated lysine residues on histone H1.4, H2A, H2B, H3 and H4 (in vitro). Interacts with EHMT1.

Its subcellular location is the nucleus. In terms of biological role, regulatory subunit of the ATP-dependent BRF-1 and BRF-5 ISWI chromatin remodeling complexes, which form ordered nucleosome arrays on chromatin and facilitate access to DNA during DNA-templated processes such as DNA replication, transcription, and repair. Both complexes regulate the spacing of nucleosomes along the chromatin and have the ability to slide mononucleosomes to the center of a DNA template. The BRF-1 ISWI chromatin remodeling complex has a lower ATP hydrolysis rate than the BRF-5 ISWI chromatin remodeling complex. Chromatin reader protein, involved in positively modulating the rate of age-related behavioral deterioration. Represses the expression of mitochondrial function-related genes, perhaps by occupying their promoter regions, working in concert with histone methyltransferase EHMT1. The polypeptide is Bromodomain adjacent to zinc finger domain protein 2B (Mus musculus (Mouse)).